The following is a 223-amino-acid chain: UPF0502 protein Avin_04790 (223 aa).

The protein belongs to the UPF0502 family.

The protein is UPF0502 protein Avin_04790 of Azotobacter vinelandii (strain DJ / ATCC BAA-1303).